The following is a 440-amino-acid chain: Thymidine phosphorylase (440 aa).

It belongs to the thymidine/pyrimidine-nucleoside phosphorylase family. In terms of assembly, homodimer.

The enzyme catalyses thymidine + phosphate = 2-deoxy-alpha-D-ribose 1-phosphate + thymine. Its pathway is pyrimidine metabolism; dTMP biosynthesis via salvage pathway; dTMP from thymine: step 1/2. Its function is as follows. The enzymes which catalyze the reversible phosphorolysis of pyrimidine nucleosides are involved in the degradation of these compounds and in their utilization as carbon and energy sources, or in the rescue of pyrimidine bases for nucleotide synthesis. This chain is Thymidine phosphorylase, found in Yersinia pestis.